Consider the following 489-residue polypeptide: Diaminopimelate decarboxylase 2, chloroplastic (489 aa).

The N-terminal 50 residues, 1–50, are a transit peptide targeting the chloroplast; it reads MAAVTQFLSQPSSIRGTLNQYQLNQTSLSRIPFLSLKSTLKPLKRLSVKA. Residue Ala51 is modified to N-acetylalanine. Lys130 carries the post-translational modification N6-(pyridoxal phosphate)lysine. Residues Gly309 and 345–348 contribute to the pyridoxal 5'-phosphate site; that span reads EPGR. Residues Arg348, Arg384, and Tyr388 each coordinate substrate. Cys416 serves as the catalytic Proton donor. 2 residues coordinate substrate: Glu417 and Tyr445. Tyr445 lines the pyridoxal 5'-phosphate pocket.

This sequence belongs to the Orn/Lys/Arg decarboxylase class-II family. LysA subfamily. As to quaternary structure, homodimer. Pyridoxal 5'-phosphate is required as a cofactor.

The protein resides in the plastid. The protein localises to the chloroplast. The enzyme catalyses meso-2,6-diaminopimelate + H(+) = L-lysine + CO2. It functions in the pathway amino-acid biosynthesis; L-lysine biosynthesis via DAP pathway; L-lysine from DL-2,6-diaminopimelate: step 1/1. Specifically catalyzes the decarboxylation of meso-diaminopimelate (meso-DAP) to L-lysine. The polypeptide is Diaminopimelate decarboxylase 2, chloroplastic (LYSA2) (Arabidopsis thaliana (Mouse-ear cress)).